The chain runs to 157 residues: Type II restriction enzyme PvuII (157 aa).

Mg(2+) is bound by residues D58 and E68.

As to quaternary structure, homodimer. Mg(2+) serves as cofactor.

It catalyses the reaction Endonucleolytic cleavage of DNA to give specific double-stranded fragments with terminal 5'-phosphates.. In terms of biological role, a P subtype restriction enzyme that recognizes the double-stranded sequence 5'-CAGCTG-3' and cleaves after G-3. The chain is Type II restriction enzyme PvuII (pvuIIR) from Proteus hauseri.